The sequence spans 192 residues: MKNKLVVVTGVPGVGGTTITQKAMEKLSEEGINYKMVNFGTVMFEVAQEENLVEDRDQMRKLDPDTQKRIQKLAGRKIAEMVKESPVVVDTHSTIKTPKGYLPGLPVWVLNELNPDIIIVVETSGDEILIRRLNDETRNRDLETTAGIEEHQIMNRAAAMTYGVLTGATVKIIQNKNNLLDYAVEELISVLR.

10 to 18 provides a ligand contact to ATP; sequence GVPGVGGTT.

The protein belongs to the archaeal adenylate kinase family. As to quaternary structure, monomer.

It is found in the cytoplasm. The enzyme catalyses AMP + ATP = 2 ADP. The polypeptide is Adenylate kinase (adkA) (Methanothermococcus thermolithotrophicus (Methanococcus thermolithotrophicus)).